The following is a 73-amino-acid chain: UPF0235 protein SYO3AOP1_0257 (73 aa).

This sequence belongs to the UPF0235 family.

The chain is UPF0235 protein SYO3AOP1_0257 from Sulfurihydrogenibium sp. (strain YO3AOP1).